Consider the following 50-residue polypeptide: U37-theraphotoxin-Cg1a (50 aa).

Positions M1 to T19 are cleaved as a signal peptide.

Belongs to the neurotoxin 10 (Hwtx-1) family. 67 (Jztx-67) subfamily. As to expression, expressed by the venom gland.

The protein resides in the secreted. The sequence is that of U37-theraphotoxin-Cg1a from Chilobrachys guangxiensis (Chinese earth tiger tarantula).